A 409-amino-acid chain; its full sequence is Endoglucanase B (409 aa).

The first 21 residues, Met1–Ala21, serve as a signal peptide directing secretion. Residues Cys23–Met66 form a disordered region. A compositionally biased stretch (basic and acidic residues) spans Lys27–Ser38. Residues Val57–Met66 show a composition bias toward polar residues. Glu212 acts as the Proton donor in catalysis. Glu332 functions as the Nucleophile in the catalytic mechanism.

Belongs to the glycosyl hydrolase 5 (cellulase A) family.

It carries out the reaction Endohydrolysis of (1-&gt;4)-beta-D-glucosidic linkages in cellulose, lichenin and cereal beta-D-glucans.. The sequence is that of Endoglucanase B (celB) from Ruminococcus albus.